A 485-amino-acid chain; its full sequence is MALSVEKTAAGREYKVKDMSLADFGRLELELAEVEMPGLMSCRTEFGPSQPFKGARITGSLHMTIQTGVLIETLTALGAEVRWCSCNIFSTQDHAAAAIARDSCAVFAWKGETLQEYWWCTERALDWGPDGGPDLIVDDGGDATLLIHEGVKAEEEYKKSGAIPDPASTDNAEFQIVLSIIRDGLKSDPMKYHKMKDRLVGVSEETTTGVKRLYQMQQNGTLLFPAINVNDSVTKSKFDNLYGCRHSLPDGLMRATDVMIAGKVALIAGYGDVGKGCAAAMKQAGARVIVTEIDPICALQATMEGLQVLPLEDVVSEVDIFVTTTGNKDIIMVSDMRKMKNNAIVCNIGHFDNEIDMLGLETYPGVKRITIKPQTDRWVFPDTGRGIIILAEGRLMNLGCATGHPSFVMSCSFTNQVIAQLELWNEKSSGKYEKKVYVLPKHLDEKVAALHLGKLGAKLTKLSKDQADYISVPVEGPYKPAHYRY.

Substrate is bound by residues T64, D139, and E205. 206–208 (TTT) is a binding site for NAD(+). The substrate site is built by K235 and D239. Residues N240, 269 to 274 (GYGDVG), E292, N327, 348 to 350 (IGH), and N397 contribute to the NAD(+) site.

The protein belongs to the adenosylhomocysteinase family. In terms of assembly, homotetramer. NAD(+) is required as a cofactor. As to expression, mainly in floral buds and stems.

It carries out the reaction S-adenosyl-L-homocysteine + H2O = L-homocysteine + adenosine. The protein operates within amino-acid biosynthesis; L-homocysteine biosynthesis; L-homocysteine from S-adenosyl-L-homocysteine: step 1/1. Its function is as follows. Adenosylhomocysteine is a competitive inhibitor of S-adenosyl-L-methionine-dependent methyl transferase reactions; therefore adenosylhomocysteinase may play a key role in the control of methylations via regulation of the intracellular concentration of adenosylhomocysteine. The chain is Adenosylhomocysteinase (SAHH) from Petroselinum crispum (Parsley).